Here is a 1438-residue protein sequence, read N- to C-terminus: DNA polymerase III PolC-type (1438 aa).

An Exonuclease domain is found at Tyr422–Phe578.

Belongs to the DNA polymerase type-C family. PolC subfamily.

The protein localises to the cytoplasm. The catalysed reaction is DNA(n) + a 2'-deoxyribonucleoside 5'-triphosphate = DNA(n+1) + diphosphate. Functionally, required for replicative DNA synthesis. This DNA polymerase also exhibits 3' to 5' exonuclease activity. The sequence is that of DNA polymerase III PolC-type from Staphylococcus aureus (strain Mu3 / ATCC 700698).